A 254-amino-acid polypeptide reads, in one-letter code: Kallikrein-4 (254 aa).

The first 26 residues, methionine 1 to glycine 26, serve as a signal peptide directing secretion. Residues serine 27–glutamine 30 constitute a propeptide that is removed on maturation. Residues isoleucine 31–glutamine 252 enclose the Peptidase S1 domain. Cystine bridges form between cysteine 37–cysteine 167, cysteine 56–cysteine 72, cysteine 141–cysteine 241, cysteine 148–cysteine 213, cysteine 178–cysteine 192, and cysteine 203–cysteine 228. Histidine 40 provides a ligand contact to Zn(2+). The active-site Charge relay system is the histidine 71. Glutamate 91 serves as a coordination point for Zn(2+). Aspartate 116 (charge relay system) is an active-site residue. Asparagine 169 carries an N-linked (GlcNAc...) asparagine glycan. Serine 207 serves as the catalytic Charge relay system.

This sequence belongs to the peptidase S1 family. Kallikrein subfamily. In terms of processing, N-glycosylated. The N-glycan structures are of complex diantennary or triantennary type, which may be further modified with up to 2 sialic acid residues. Expressed in prostate.

The protein localises to the secreted. In terms of biological role, has a major role in enamel formation. Required during the maturation stage of tooth development for clearance of enamel proteins and normal structural patterning of the crystalline matrix. The polypeptide is Kallikrein-4 (KLK4) (Homo sapiens (Human)).